The sequence spans 347 residues: Phenylalanine--tRNA ligase alpha subunit (347 aa).

Glu265 is a Mg(2+) binding site.

Belongs to the class-II aminoacyl-tRNA synthetase family. Phe-tRNA synthetase alpha subunit type 1 subfamily. In terms of assembly, tetramer of two alpha and two beta subunits. The cofactor is Mg(2+).

The protein resides in the cytoplasm. The enzyme catalyses tRNA(Phe) + L-phenylalanine + ATP = L-phenylalanyl-tRNA(Phe) + AMP + diphosphate + H(+). This is Phenylalanine--tRNA ligase alpha subunit from Mycolicibacterium gilvum (strain PYR-GCK) (Mycobacterium gilvum (strain PYR-GCK)).